A 648-amino-acid polypeptide reads, in one-letter code: 60 kDa heat shock protein homolog 1, mitochondrial (648 aa).

Residues 1–55 constitute a mitochondrion transit peptide; it reads MFRSCVPKAITSSRCFARMYSKDVRFGSGVRAMMIRGVDILADAVAVTMGPKGRS.

The protein belongs to the chaperonin (HSP60) family.

It localises to the mitochondrion matrix. Its function is as follows. Prevents misfolding and promotes the refolding and proper assembly of unfolded polypeptides generated under stress conditions. The protein is 60 kDa heat shock protein homolog 1, mitochondrial (Hsp60B) of Drosophila melanogaster (Fruit fly).